We begin with the raw amino-acid sequence, 118 residues long: Large ribosomal subunit protein uL18 (118 aa).

The protein belongs to the universal ribosomal protein uL18 family. Part of the 50S ribosomal subunit; part of the 5S rRNA/L5/L18/L25 subcomplex. Contacts the 5S and 23S rRNAs.

In terms of biological role, this is one of the proteins that bind and probably mediate the attachment of the 5S RNA into the large ribosomal subunit, where it forms part of the central protuberance. In Acidobacterium capsulatum (strain ATCC 51196 / DSM 11244 / BCRC 80197 / JCM 7670 / NBRC 15755 / NCIMB 13165 / 161), this protein is Large ribosomal subunit protein uL18.